The chain runs to 138 residues: Large ribosomal subunit protein bL12c (138 aa).

The protein belongs to the bacterial ribosomal protein bL12 family. In terms of assembly, homodimer. Part of the ribosomal stalk of the 50S ribosomal subunit. Forms a multimeric L10(L12)X complex, where L10 forms an elongated spine to which 2 to 4 L12 dimers bind in a sequential fashion. Binds GTP-bound translation factors.

Its subcellular location is the plastid. In terms of biological role, forms part of the ribosomal stalk which helps the ribosome interact with GTP-bound translation factors. Is thus essential for accurate translation. This is Large ribosomal subunit protein bL12c from Euglena longa (Euglenophycean alga).